Here is a 205-residue protein sequence, read N- to C-terminus: Small ribosomal subunit protein uS4c (205 aa).

The 62-residue stretch at 93–154 folds into the S4 RNA-binding domain; the sequence is MRLDNTIFRL…RTQTIALIQQ (62 aa).

It belongs to the universal ribosomal protein uS4 family. As to quaternary structure, part of the 30S ribosomal subunit. Contacts protein S5. The interaction surface between S4 and S5 is involved in control of translational fidelity.

The protein resides in the plastid. It localises to the chloroplast. In terms of biological role, one of the primary rRNA binding proteins, it binds directly to 16S rRNA where it nucleates assembly of the body of the 30S subunit. With S5 and S12 plays an important role in translational accuracy. The protein is Small ribosomal subunit protein uS4c (rps4) of Chaetosphaeridium globosum (Charophycean green alga).